A 388-amino-acid polypeptide reads, in one-letter code: Succinate--CoA ligase [ADP-forming] subunit beta (388 aa).

The ATP-grasp domain occupies 9 to 244 (KEILRKFGVA…LDEEDPAEIE (236 aa)). ATP contacts are provided by residues Lys-46, 53–55 (GRG), Glu-99, Ala-102, and Glu-107. Asn-199 and Asp-213 together coordinate Mg(2+). Substrate is bound by residues Asn-264 and 321–323 (GIM).

This sequence belongs to the succinate/malate CoA ligase beta subunit family. Heterotetramer of two alpha and two beta subunits. It depends on Mg(2+) as a cofactor.

The enzyme catalyses succinate + ATP + CoA = succinyl-CoA + ADP + phosphate. It catalyses the reaction GTP + succinate + CoA = succinyl-CoA + GDP + phosphate. It functions in the pathway carbohydrate metabolism; tricarboxylic acid cycle; succinate from succinyl-CoA (ligase route): step 1/1. Functionally, succinyl-CoA synthetase functions in the citric acid cycle (TCA), coupling the hydrolysis of succinyl-CoA to the synthesis of either ATP or GTP and thus represents the only step of substrate-level phosphorylation in the TCA. The beta subunit provides nucleotide specificity of the enzyme and binds the substrate succinate, while the binding sites for coenzyme A and phosphate are found in the alpha subunit. The chain is Succinate--CoA ligase [ADP-forming] subunit beta from Burkholderia vietnamiensis (strain G4 / LMG 22486) (Burkholderia cepacia (strain R1808)).